We begin with the raw amino-acid sequence, 525 residues long: Ribosomal protein S6 kinase beta-1 (525 aa).

Residues 28 to 32 carry the TOS motif motif; sequence FDIDL. Residues 28–54 are disordered; the sequence is FDIDLDQPEDAGSEDELEEGGQLNESM. Positions 30 to 46 are enriched in acidic residues; the sequence is IDLDQPEDAGSEDELEE. In terms of domain architecture, Protein kinase spans 91 to 352; it reads FELLRVLGKG…AGEVQAHPFF (262 aa). Residues 97-105 and lysine 123 each bind ATP; that span reads LGKGGYGKV. Catalysis depends on aspartate 218, which acts as the Proton acceptor. Threonine 252 carries the phosphothreonine; by PDPK1 modification. Residues 353 to 423 enclose the AGC-kinase C-terminal domain; that stretch reads RHINWEELLA…VAPSVLESVK (71 aa). Residues 380-399 are disordered; sequence SQFDSKFTRQTPVDSPDDST. Over residues 381–399 the composition is skewed to polar residues; the sequence is QFDSKFTRQTPVDSPDDST. Serine 394 is modified (phosphoserine). Threonine 412 bears the Phosphothreonine; by MTOR, NEK6 and NEK7 mark. Residues 424–525 form an autoinhibitory domain region; sequence EKFSFEPKIR…KRPEHLRMNL (102 aa). A phosphoserine mark is found at serine 434 and serine 441. Threonine 444 carries the phosphothreonine modification. Phosphoserine is present on residues serine 447 and serine 452. The segment at 486–509 is disordered; that stretch reads VTTSGEASAPLPIRQPNSGPYKKQ. Position 516 is an N6-acetyllysine (lysine 516).

It belongs to the protein kinase superfamily. AGC Ser/Thr protein kinase family. S6 kinase subfamily. In terms of assembly, interacts with PPP1R9A/neurabin-1. Interacts with RPTOR. Interacts with IRS1. Interacts with EIF3B and EIF3C. Interacts with POLDIP3. Interacts with TRAF4. Interacts (via N-terminus) with IER5. Post-translationally, dephosphorylation by PPP1CC at Thr-412 in mitochondrion. Phosphorylation at Thr-412 is regulated by mTORC1. The phosphorylation at this site is maintained by an agonist-dependent autophosphorylation mechanism. Activated by phosphorylation at Thr-252 by PDPK1. As to expression, brain.

The protein localises to the cytoplasm. The protein resides in the synapse. Its subcellular location is the synaptosome. It is found in the mitochondrion outer membrane. It localises to the mitochondrion. The enzyme catalyses L-seryl-[protein] + ATP = O-phospho-L-seryl-[protein] + ADP + H(+). It carries out the reaction L-threonyl-[protein] + ATP = O-phospho-L-threonyl-[protein] + ADP + H(+). Its activity is regulated as follows. Activation requires multiple phosphorylation events on serine/threonine residues. Activation appears to be first mediated by phosphorylation of multiple sites in the autoinhibitory domain, which facilitates phosphorylation at Thr-412, disrupting the autoinhibitory mechanism and allowing phosphorylation of Thr-252 by PDPK1. The active conformation of the kinase is believed to be stabilized by a mechanism involving three conserved phosphorylation sites located in the kinase domain activation loop (Thr-252) and in the AGC-kinase C-terminal domain (Ser-394 in the middle of the tail/linker region and Thr-412 within a hydrophobic motif at its end). Activated by mTORC1; isoform Alpha I and isoform Alpha II are sensitive to rapamycin, which inhibits activating phosphorylation at Thr-412. Activated by PDPK1. Functionally, serine/threonine-protein kinase that acts downstream of mTOR signaling in response to growth factors and nutrients to promote cell proliferation, cell growth and cell cycle progression. Regulates protein synthesis through phosphorylation of EIF4B, RPS6 and EEF2K, and contributes to cell survival by repressing the pro-apoptotic function of BAD. Under conditions of nutrient depletion, the inactive form associates with the EIF3 translation initiation complex. Upon mitogenic stimulation, phosphorylation by the mechanistic target of rapamycin complex 1 (mTORC1) leads to dissociation from the EIF3 complex and activation. The active form then phosphorylates and activates several substrates in the pre-initiation complex, including the EIF2B complex and the cap-binding complex component EIF4B. Also controls translation initiation by phosphorylating a negative regulator of EIF4A, PDCD4, targeting it for ubiquitination and subsequent proteolysis. Promotes initiation of the pioneer round of protein synthesis by phosphorylating POLDIP3/SKAR. In response to IGF1, activates translation elongation by phosphorylating EEF2 kinase (EEF2K), which leads to its inhibition and thus activation of EEF2. Also plays a role in feedback regulation of mTORC2 by mTORC1 by phosphorylating MAPKAP1/SIN1, MTOR and RICTOR, resulting in the inhibition of mTORC2 and AKT1 signaling. Also involved in feedback regulation of mTORC1 and mTORC2 by phosphorylating DEPTOR. Mediates cell survival by phosphorylating the pro-apoptotic protein BAD and suppressing its pro-apoptotic function. Phosphorylates mitochondrial URI1 leading to dissociation of a URI1-PPP1CC complex. The free mitochondrial PPP1CC can then dephosphorylate RPS6KB1 at Thr-412, which is proposed to be a negative feedback mechanism for the RPS6KB1 anti-apoptotic function. Mediates TNF-alpha-induced insulin resistance by phosphorylating IRS1 at multiple serine residues, resulting in accelerated degradation of IRS1. In cells lacking functional TSC1-2 complex, constitutively phosphorylates and inhibits GSK3B. May be involved in cytoskeletal rearrangement through binding to neurabin. Phosphorylates and activates the pyrimidine biosynthesis enzyme CAD, downstream of MTOR. Following activation by mTORC1, phosphorylates EPRS and thereby plays a key role in fatty acid uptake by adipocytes and also most probably in interferon-gamma-induced translation inhibition. This is Ribosomal protein S6 kinase beta-1 (Rps6kb1) from Rattus norvegicus (Rat).